We begin with the raw amino-acid sequence, 273 residues long: Ribosomal RNA small subunit methyltransferase A (273 aa).

S-adenosyl-L-methionine contacts are provided by Asn-18, Leu-20, Gly-45, Glu-66, Asp-91, and Asn-113.

The protein belongs to the class I-like SAM-binding methyltransferase superfamily. rRNA adenine N(6)-methyltransferase family. RsmA subfamily.

It localises to the cytoplasm. The enzyme catalyses adenosine(1518)/adenosine(1519) in 16S rRNA + 4 S-adenosyl-L-methionine = N(6)-dimethyladenosine(1518)/N(6)-dimethyladenosine(1519) in 16S rRNA + 4 S-adenosyl-L-homocysteine + 4 H(+). Specifically dimethylates two adjacent adenosines (A1518 and A1519) in the loop of a conserved hairpin near the 3'-end of 16S rRNA in the 30S particle. May play a critical role in biogenesis of 30S subunits. The polypeptide is Ribosomal RNA small subunit methyltransferase A (Salmonella agona (strain SL483)).